A 423-amino-acid chain; its full sequence is Endoplasmic reticulum junction formation protein lunapark (423 aa).

Over Met-1–Arg-45 the chain is Cytoplasmic. Positions Glu-16–Lys-40 form a coiled coil. The helical transmembrane segment at Leu-46 to Leu-66 threads the bilayer. Over Pro-67 to Met-77 the chain is Lumenal. The helical transmembrane segment at Leu-78 to Phe-98 threads the bilayer. Residues Ser-99–Glu-423 are Cytoplasmic-facing. A coiled-coil region spans residues Arg-101–Thr-128. The interval Lys-147–Arg-169 is disordered. Thr-159 is modified (phosphothreonine). Residues Ser-177, Ser-179, and Ser-188 each carry the phosphoserine modification. A Phosphothreonine modification is found at Thr-198. The segment at Ser-200 to Pro-247 is disordered. Phosphoserine occurs at positions 206 and 215. Polar residues predominate over residues Val-216–Leu-225. The residue at position 219 (Thr-219) is a Phosphothreonine. 2 positions are modified to phosphoserine: Ser-222 and Ser-231. Residues Cys-280–Cys-305 form a C4-type; plays a role in ER morphology zinc finger. Positions Ala-318–Glu-423 are disordered. Polar residues predominate over residues Asp-334–Gln-343. 2 stretches are compositionally biased toward acidic residues: residues Gln-370–Glu-391 and Glu-414–Glu-423.

Belongs to the lunapark family. In terms of assembly, homodimer; homodimerization requires the C4-type zinc finger motif and decreases during mitosis in a phosphorylation-dependent manner. In terms of processing, phosphorylated. Phosphorylation at Thr-159 occurs during interphase. Phosphorylation at Ser-177, Ser-179, Ser-188, Thr-198, Ser-206, Ser-215, Thr-219, Ser-222 and Ser-231 occurs during mitosis; these phosphorylations reduce both its homodimerization and the ER three-way tubular junction formation.

Its subcellular location is the endoplasmic reticulum membrane. Functionally, endoplasmic reticulum (ER)-shaping membrane protein that plays a role in determining ER morphology. Involved in the stabilization of nascent three-way ER tubular junctions within the ER network. May also play a role as a curvature-stabilizing protein within three-way ER tubular junction network. This is Endoplasmic reticulum junction formation protein lunapark (lnpk) from Xenopus tropicalis (Western clawed frog).